The chain runs to 154 residues: Immunity protein YwqK (154 aa).

In terms of assembly, probably interacts with cognate toxin YwqJ but not with other non-cognate LXG toxins. The interaction inhibits the toxic activity of YwqJ.

It is found in the cytoplasm. Functionally, immunity component of one of 6 LXG toxin-immunity modules in this strain. They promote kin selection, mediate competition in biofilms, and drive spatial segregation of different strains, indicating that LXG toxins may help avoid warfare between strains in biofilms. Mediates intercellular competition during biofilm formation; disruption of the operon disadvantages the bacteria, but overexpression of the cognate immunity protein restores growth in competition with wild-type. In situ neutralizes the toxic effect of cognate toxin YqcG. Probably neutralizes the ability to inhibit growth of cognate toxin YwqJ. Probably does not have immunity protein activity on other LXG toxins. This chain is Immunity protein YwqK (ywqK), found in Bacillus subtilis (strain 168).